A 98-amino-acid chain; its full sequence is Co-chaperonin GroES (98 aa).

Belongs to the GroES chaperonin family. Heptamer of 7 subunits arranged in a ring. Interacts with the chaperonin GroEL.

The protein resides in the cytoplasm. Functionally, together with the chaperonin GroEL, plays an essential role in assisting protein folding. The GroEL-GroES system forms a nano-cage that allows encapsulation of the non-native substrate proteins and provides a physical environment optimized to promote and accelerate protein folding. GroES binds to the apical surface of the GroEL ring, thereby capping the opening of the GroEL channel. In Renibacterium salmoninarum (strain ATCC 33209 / DSM 20767 / JCM 11484 / NBRC 15589 / NCIMB 2235), this protein is Co-chaperonin GroES.